Reading from the N-terminus, the 178-residue chain is MKIALSGKSGCGNTTVSSMIAKHYGLEFINYTFHDIARERNIPFSEFYEKEIIGRDDYYWDRYLDKRLFALSKKNNTVLASRLAIWISKSADLKIYLYAKMEVRAERIMTREGGMYSDVLSSTFNRDENDKKRYLAIYNIDIDDYSSETDLVIDVTNINSNEVFELIRDEIDKRNLKN.

Position 7–15 (7–15 (GKSGCGNTT)) interacts with ATP.

It belongs to the cytidylate kinase family. Type 2 subfamily.

It localises to the cytoplasm. It carries out the reaction CMP + ATP = CDP + ADP. The catalysed reaction is dCMP + ATP = dCDP + ADP. The protein is Cytidylate kinase 2 of Borreliella afzelii (strain PKo) (Borrelia afzelii).